The following is a 1218-amino-acid chain: NACHT, LRR and PYD domains-containing protein 1a allele 3 (1218 aa).

A compositionally biased stretch (polar residues) spans Met-1–Thr-29. 2 disordered regions span residues Met-1–Gln-44 and Glu-71–Glu-91. The span at Arg-77 to Leu-87 shows a compositional bias: basic residues. One can recognise an NACHT domain in the interval Gln-175–Leu-484. Position 181–188 (Gly-181–Ser-188) interacts with ATP. LRR repeat units follow at residues Lys-343–Cys-364, Asn-673–Cys-693, and Arg-730–Cys-750. Residues Thr-799 to Lys-815 show a composition bias toward polar residues. The tract at residues Thr-799–Val-842 is disordered. Residues Phe-835–Phe-968 are ZU5. Positions Phe-835–Ser-1118 constitute an FIIND domain. Residues Ser-969–Ser-1118 form a UPA region. The CARD domain maps to Asp-1122 to Ser-1211.

This sequence belongs to the NLRP family. In terms of assembly, interacts (via LRR repeats) with BCL2 and BCL2L1 (via the loop between motifs BH4 and BH3). Interacts with NOD2; this interaction is enhanced in the presence of muramyl dipeptide (MDP) and increases IL1B release. Interacts with EIF2AK2/PKR; this interaction requires EIF2AK2 activity, is accompanied by EIF2AK2 autophosphorylation and promotes inflammasome assembly in response to danger-associated signals. Interacts with MEFV; this interaction targets Nlrp1a to degradation by autophagy, hence preventing excessive IL1B- and IL18-mediated inflammation. Interacts with DPP9; leading to inhibit activation of the inflammasome. DPP9 acts via formation of a ternary complex, composed of a DPP9 homodimer, one full-length NLRP1 protein, and one cleaved C-terminus of Nlrp1a (NACHT, LRR and PYD domains-containing protein 1a, C-terminus). Interacts with DPP8; leading to inhibit activation of the inflammasome, probably via formation of a ternary complex with DPP8. Interacts with the C-terminal part of Nlrp1a (NACHT, LRR and PYD domains-containing protein 1a, C-terminus) in absence of pathogens and other damage-associated signals. As to quaternary structure, interacts with the N-terminal part of Nlrp1a (NACHT, LRR and PYD domains-containing protein 1a, N-terminus) in absence of pathogens and other damage-associated signals. Homomultimer; forms the Nlrp1a inflammasome polymeric complex, a filament composed of homopolymers of this form in response to pathogens and other damage-associated signals. The Nlrp1a inflammasome polymeric complex directly recruits pro-caspase-1 (proCASP1) independently of PYCARD/ASC. Interacts (via CARD domain) with CASP1 (via CARD domain); leading to CASP1 activation. Autocatalytically cleaved. Autocatalytic cleavage in FIIND region occurs constitutively, prior to activation signals, and is required for inflammasome activity (IL1B release), possibly by facilitating CASP1 binding. Both N- and C-terminal parts remain associated non-covalently. Post-translationally, ubiquitinated in response to pathogen-associated signals, leading to its degradation by the proteasome and subsequent release of the cleaved C-terminal part of the protein (NACHT, LRR and PYD domains-containing protein 1a, C-terminus), which polymerizes and forms the Nlrp1a inflammasome.

Its subcellular location is the cytoplasm. It is found in the cytosol. The protein localises to the nucleus. The protein resides in the inflammasome. Activated by pathogens and other damage-associated signals: activation promotes ubiquitination and degradation of the N-terminal part, releasing the cleaved C-terminal part of the protein (NACHT, LRR and PYD domains-containing protein 1a, C-terminus), which polymerizes and forms the Nlrp1a inflammasome. Nlrp1a inflammasome is inhibited by DPP8 and DPP9, which sequester the C-terminal fragment of Nlrp1a (NACHT, LRR and PYD domains-containing protein 1a, C-terminus) in a ternary complex, thereby preventing Nlrp1a oligomerization and activation. Nlrp1a inflammasome is strongly activated by Val-boroPro (Talabostat, PT-100), an inhibitor of dipeptidyl peptidases DPP8 and DPP9. Val-boroPro relieves inhibition of DPP8 and/or DPP9 by promoting disruption of the ternary complex, releasing its C-terminal part from autoinhibition. Not activated by cleavage by B.anthracis lethal toxin (LT) endopeptidase. Functionally, acts as the sensor component of the Nlrp1a inflammasome, which mediates inflammasome activation in response to various pathogen-associated signals, leading to subsequent pyroptosis. Inflammasomes are supramolecular complexes that assemble in the cytosol in response to pathogens and other damage-associated signals and play critical roles in innate immunity and inflammation. Acts as a recognition receptor (PRR): recognizes specific pathogens and other damage-associated signals, such as Val-boroPro inhibitor, and mediates the formation of the inflammasome polymeric complex. In response to pathogen-associated signals, the N-terminal part of Nlrp1a is degraded by the proteasome, releasing the cleaved C-terminal part of the protein (NACHT, LRR and PYD domains-containing protein 1a, C-terminus), which polymerizes to initiate the formation of the inflammasome complex: the inflammasome directly recruits pro-caspase-1 (proCASP1) independently of PYCARD/ASC and promotes caspase-1 (CASP1) activation, which subsequently cleaves and activates inflammatory cytokines IL1B and IL18 and gasdermin-D (GSDMD), leading to pyroptosis. In the absence of GSDMD expression, the Nlrp1a inflammasome is able to recruit and activate CASP8, leading to activation of gasdermin-E (GSDME). Constitutes the precursor of the Nlrp1a inflammasome, which mediates autoproteolytic processing within the FIIND domain to generate the N-terminal and C-terminal parts, which are associated non-covalently in absence of pathogens and other damage-associated signals. In terms of biological role, regulatory part that prevents formation of the Nlrp1a inflammasome: in absence of pathogens and other damage-associated signals, interacts with the C-terminal part of Nlrp1a (NACHT, LRR and PYD domains-containing protein 1a, C-terminus), preventing activation of the Nlrp1a inflammasome. In response to pathogen-associated signals, this part is ubiquitinated by the N-end rule pathway and degraded by the proteasome, releasing the cleaved C-terminal part of the protein, which polymerizes and forms the Nlrp1a inflammasome. Its function is as follows. Constitutes the active part of the Nlrp1a inflammasome. In absence of pathogens and other damage-associated signals, interacts with the N-terminal part of Nlrp1a (NACHT, LRR and PYD domains-containing protein 1a, N-terminus), preventing activation of the Nlrp1a inflammasome. In response to pathogen-associated signals, the N-terminal part of Nlrp1a is degraded by the proteasome, releasing this form, which polymerizes to form the Nlrp1a inflammasome complex: the Nlrp1a inflammasome complex then directly recruits pro-caspase-1 (proCASP1) and promotes caspase-1 (CASP1) activation, leading to gasdermin-D (GSDMD) cleavage and subsequent pyroptosis. This chain is NACHT, LRR and PYD domains-containing protein 1a allele 3, found in Rattus norvegicus (Rat).